Consider the following 415-residue polypeptide: Methylaspartate ammonia-lyase 2 (415 aa).

Q173 is a (2S,3S)-3-methyl-L-aspartate binding site. Residues D238, E273, and D307 each coordinate Mg(2+). (2S,3S)-3-methyl-L-aspartate is bound at residue Q329. Catalysis depends on K331, which acts as the Proton acceptor. A (2S,3S)-3-methyl-L-aspartate-binding site is contributed by 360 to 361 (TC).

The protein belongs to the methylaspartate ammonia-lyase family. Homodimer. It depends on Mg(2+) as a cofactor.

It carries out the reaction (2S,3S)-3-methyl-L-aspartate = mesaconate + NH4(+). Its pathway is amino-acid degradation; L-glutamate degradation via mesaconate pathway; acetate and pyruvate from L-glutamate: step 2/4. In terms of biological role, involved in the methylaspartate cycle. Catalyzes the formation of the alpha,beta-unsaturated bond by the reversible anti elimination of ammonia from L-threo-beta-methylaspartate (L-threo-(2S,3S)-3-methylaspartate) to give mesaconate. The chain is Methylaspartate ammonia-lyase 2 from Carboxydothermus hydrogenoformans (strain ATCC BAA-161 / DSM 6008 / Z-2901).